The chain runs to 94 residues: Large ribosomal subunit protein bL25 (94 aa).

This sequence belongs to the bacterial ribosomal protein bL25 family. As to quaternary structure, part of the 50S ribosomal subunit; part of the 5S rRNA/L5/L18/L25 subcomplex. Contacts the 5S rRNA. Binds to the 5S rRNA independently of L5 and L18.

Its function is as follows. This is one of the proteins that binds to the 5S RNA in the ribosome where it forms part of the central protuberance. The protein is Large ribosomal subunit protein bL25 of Klebsiella pneumoniae subsp. pneumoniae (strain ATCC 700721 / MGH 78578).